Reading from the N-terminus, the 210-residue chain is Fimbriae Z protein (210 aa).

The Response regulatory domain maps to 5–121 (SVIIMDTHPI…DIFHAVQMIL (117 aa)). Aspartate 56 is subject to 4-aspartylphosphate. The 66-residue stretch at 143–208 (NSSTVTVLSN…ELIDYAKLYE (66 aa)) folds into the HTH luxR-type domain. The segment at residues 167 to 186 (NKEIADKLLLSNKTVSAHKS) is a DNA-binding region (H-T-H motif).

It localises to the cytoplasm. The polypeptide is Fimbriae Z protein (fimZ) (Escherichia coli O157:H7).